A 523-amino-acid polypeptide reads, in one-letter code: Melanoma-associated antigen E2 (523 aa).

MAGE domains are found at residues 88-288 and 311-502; these read LEDR…YNKA and MNDK…YREA.

The chain is Melanoma-associated antigen E2 (MAGEE2) from Homo sapiens (Human).